The primary structure comprises 1423 residues: Guanine nucleotide exchange factor subunit RIC1 (1423 aa).

WD repeat units follow at residues 64 to 103 and 304 to 343; these read TQFG…GDKY and NKTG…LICT. Positions 437–448 are enriched in polar residues; the sequence is ASQTQNPRSSST. The interval 437–463 is disordered; the sequence is ASQTQNPRSSSTHSEHKPSREKSPFAD. Basic and acidic residues predominate over residues 449 to 460; that stretch reads HSEHKPSREKSP. Phosphothreonine is present on residues threonine 992 and threonine 996. Serine 1015, serine 1017, serine 1019, serine 1037, and serine 1172 each carry phosphoserine. A disordered region spans residues 1355-1423; it reads PDAFQPITMG…QDGTYDCSVS (69 aa). The span at 1379–1397 shows a compositional bias: polar residues; sequence GSSSHGSIPQGEVGSSNMV. Residues 1404-1413 show a composition bias toward acidic residues; that stretch reads TAQAEEEEPF.

Belongs to the RIC1 family. As to quaternary structure, forms a complex with RGP1; the interaction enhances RAB6A GTPase activity. Interacts (via central domain) with RGP1. Interacts with RAB6A; the interaction is direct with a preference for RAB6A-GDP. Interacts (via C-terminus domain) with RAB33B; the interaction is direct with a preference for RAB33B-GTP. Interacts with GJA1. Present in kidney and various cell lines (at protein level). Widely expressed at low level.

The protein resides in the cytoplasm. Its subcellular location is the cytosol. It localises to the membrane. The RIC1-RGP1 complex acts as a guanine nucleotide exchange factor (GEF), which activates RAB6A by exchanging bound GDP for free GTP, and may thereby be required for efficient fusion of endosome-derived vesicles with the Golgi compartment. The RIC1-RGP1 complex participates in the recycling of mannose-6-phosphate receptors. Required for phosphorylation and localization of GJA1. Is a regulator of procollagen transport and secretion, and is required for correct cartilage morphogenesis and development of the craniofacial skeleton. In Homo sapiens (Human), this protein is Guanine nucleotide exchange factor subunit RIC1.